The following is a 1322-amino-acid chain: Centrosome-associated protein Alms1a (1322 aa).

Disordered stretches follow at residues 1 to 26 (MRAK…ESSR), 53 to 135 (TASS…SEVT), 165 to 193 (SQSA…SVLK), 252 to 442 (EEPS…NSVY), 464 to 614 (KHNQ…GSRP), 657 to 752 (ESST…ASTD), 814 to 844 (SKSQ…KERP), 856 to 911 (AEAE…LNQR), and 1083 to 1109 (ASAT…SSMM). Low complexity predominate over residues 53–62 (TASSGASGST). The segment covering 78 to 111 (MEHESRPESGHRRRTKSSDHRSPDERGEAKEQLR) has biased composition (basic and acidic residues). Over residues 165 to 189 (SQSAEDIRTPTKSPQMQNKKTQTPE) the composition is skewed to polar residues. The segment covering 279 to 292 (SLNSGMESSLSSNK) has biased composition (low complexity). Residues 309-318 (EVSSCQTDCR) are compositionally biased toward polar residues. Over residues 319–330 (SSSQKESTQGSS) the composition is skewed to low complexity. The segment covering 338–350 (NFTTEGTQCSYNR) has biased composition (polar residues). Residues 354–364 (EIDSIMEEEES) are compositionally biased toward acidic residues. Basic and acidic residues-rich tracts occupy residues 365–375 (IDRRKKDDLRI) and 394–408 (SRRE…DDSR). Positions 409 to 430 (LNSPNSSRLGSEVSSRVESSRS) are enriched in low complexity. Basic and acidic residues-rich tracts occupy residues 464–487 (KHNQ…EQHQ), 495–512 (PKGR…REQQ), and 519–538 (RDQR…EREQ). Low complexity-rich tracts occupy residues 594–605 (STGVTASTSTTS) and 657–669 (ESST…SSSS). The segment covering 678-696 (GSLQQVAATNTNQSNARSS) has biased composition (polar residues). Positions 714 to 735 (AIGSSSPLPESVSYSGSTSGSG) are enriched in low complexity. Polar residues-rich tracts occupy residues 737 to 751 (VITQ…NAST) and 822 to 832 (TESATAAQIPS). A compositionally biased stretch (pro residues) spans 893–907 (LPAPPPTQPPPPPPH). The span at 1092-1107 (SAITRSTTTTTNSSSS) shows a compositional bias: low complexity. The segment at 1115–1322 (MSVPMGMMNT…ISLNHSMAIM (208 aa)) is interaction with Klp10A. Positions 1190-1309 (SLQDQLQLAR…FNKRLKSRVA (120 aa)) are ALMS motif.

It belongs to the ALMS1 family. As to quaternary structure, interacts (via C-terminus) with Klp10A. Interacts with SAK. In terms of tissue distribution, expressed in all germlines, including germline stem cells and spermatogonia.

Its subcellular location is the cytoplasm. It is found in the cytoskeleton. The protein resides in the microtubule organizing center. It localises to the centrosome. The protein localises to the centriole. In terms of biological role, in asymmetrically dividing germline stem cells (GSCs), plays a critical role in ensuring centrosome duplication, which is essential for the production of centrosomes and centrioles in all downstream germ cells. Might recruit SAK for daughter centriole duplication. This is Centrosome-associated protein Alms1a from Drosophila melanogaster (Fruit fly).